Consider the following 327-residue polypeptide: Annexin A8-like protein 1 (327 aa).

4 Annexin repeats span residues 21 to 92 (FNPD…ALMY), 93 to 164 (PPYR…CLLQ), 177 to 249 (ALAL…TVVK), and 253 to 324 (NLHS…SLVG). Ca(2+) is bound by residues M266, G268, G270, and D310.

This sequence belongs to the annexin family.

This Homo sapiens (Human) protein is Annexin A8-like protein 1.